Consider the following 333-residue polypeptide: MNIKTIVINWHITESCNYKCKYCFAKWNRVKEIWTNPDNVRKILENLKSIRLEDCLFTQKRLNIVGGEPILQQERLWQVIKMAHEMDFEISIITNGSHLEYICPFVHLISQVGVSIDSFDHKTNVRIGRECNGKTISFQQLKEKLEELRTLNPGLNIKINTVVNEYNFNEILVDRMAELKIDKWKILRQLPFDGKEGISDFKFNTFLFNNLKEEKMPKKDPLSNFLAAFSAPQKQNNVIFVEDNDVMTESYLMIAPDGRLFQNGHKEYEYSHPLTEISIDEALEEINFDQEKFNNRYENYATEEAKYRMEEFFLMNEYEDVSFDCCCPFGDKD.

In terms of domain architecture, Radical SAM core spans 1–239; the sequence is MNIKTIVINW…SAPQKQNNVI (239 aa). [4Fe-4S] cluster-binding residues include Cys-16, Cys-20, and Cys-23.

This sequence belongs to the radical SAM superfamily. Viperin family. [4Fe-4S] cluster serves as cofactor.

The catalysed reaction is GTP + AH2 + S-adenosyl-L-methionine = 3'-deoxy-3',4'-didehydro-GTP + 5'-deoxyadenosine + L-methionine + A + H2O + H(+). Its function is as follows. Expression of pVip56 in E.coli (strain MG1655) confers resistance to phage P1; has no effect against T7. Catalyzes the conversion of guanosine triphosphate (GTP) to 3'-deoxy-3',4'-didehydro-GTP (ddhGTP), probably via a SAM-dependent radical mechanism. The modified nucleotide represses transcription from T7 RNA polymerase-directed genes (possibly by acting as chain terminators), strongly suggesting these nucleotides block viral polymerase transcription. How this protein allows bacteria to resist viruses that do not encode their own RNA polymerase (such as lambda, P1) is unknown. The protein is S-adenosylmethionine-dependent nucleotide dehydratase of Fibrobacter sp. (strain UWH6).